The primary structure comprises 532 residues: Deoxyribodipyrimidine photo-lyase (532 aa).

Residues 1–57 form a disordered region; sequence MDSKKRSHSTGGEAENMESQESKAKRKPLQKHQFSKSNVVQKEEKDKTEGEEKGAEG. Residues 24–34 show a composition bias toward basic residues; sequence AKRKPLQKHQF. Basic and acidic residues predominate over residues 41-55; it reads QKEEKDKTEGEEKGA. The Photolyase/cryptochrome alpha/beta domain maps to 97–229; it reads QAFVYWMSRD…QVDAHNIVPC (133 aa). Arginine 322 provides a ligand contact to DNA. 2 interaction with DNA regions span residues 368–376 and 442–443; these read EAVVRRELA and GF. Residue 468-470 coordinates FAD; the sequence is YLN.

This sequence belongs to the DNA photolyase class-2 family. FAD is required as a cofactor.

The enzyme catalyses cyclobutadipyrimidine (in DNA) = 2 pyrimidine residues (in DNA).. In terms of biological role, involved in repair of UV radiation-induced DNA damage. Catalyzes the light-dependent monomerization (300-600 nm) of cyclobutyl pyrimidine dimers (in cis-syn configuration), which are formed between adjacent bases on the same DNA strand upon exposure to ultraviolet radiation. The sequence is that of Deoxyribodipyrimidine photo-lyase (PHR) from Potorous tridactylus (Potoroo).